The following is a 282-amino-acid chain: Ribosomal RNA small subunit methyltransferase A (282 aa).

S-adenosyl-L-methionine contacts are provided by N28, L30, G55, E77, D103, and N123.

This sequence belongs to the class I-like SAM-binding methyltransferase superfamily. rRNA adenine N(6)-methyltransferase family. RsmA subfamily.

The protein resides in the cytoplasm. The catalysed reaction is adenosine(1518)/adenosine(1519) in 16S rRNA + 4 S-adenosyl-L-methionine = N(6)-dimethyladenosine(1518)/N(6)-dimethyladenosine(1519) in 16S rRNA + 4 S-adenosyl-L-homocysteine + 4 H(+). Its function is as follows. Specifically dimethylates two adjacent adenosines (A1518 and A1519) in the loop of a conserved hairpin near the 3'-end of 16S rRNA in the 30S particle. May play a critical role in biogenesis of 30S subunits. This is Ribosomal RNA small subunit methyltransferase A from Afipia carboxidovorans (strain ATCC 49405 / DSM 1227 / KCTC 32145 / OM5) (Oligotropha carboxidovorans).